We begin with the raw amino-acid sequence, 675 residues long: Polyphosphate kinase (675 aa).

Asn-42 serves as a coordination point for ATP. 2 residues coordinate Mg(2+): Arg-372 and Arg-401. The active-site Phosphohistidine intermediate is the His-431. ATP contacts are provided by Tyr-464, Arg-558, and His-586.

The protein belongs to the polyphosphate kinase 1 (PPK1) family. Mg(2+) is required as a cofactor. Post-translationally, an intermediate of this reaction is the autophosphorylated ppk in which a phosphate is covalently linked to a histidine residue through a N-P bond.

The enzyme catalyses [phosphate](n) + ATP = [phosphate](n+1) + ADP. Its function is as follows. Catalyzes the reversible transfer of the terminal phosphate of ATP to form a long-chain polyphosphate (polyP). The sequence is that of Polyphosphate kinase from Helicobacter pylori (strain J99 / ATCC 700824) (Campylobacter pylori J99).